We begin with the raw amino-acid sequence, 370 residues long: 3-hydroxy-3-methylglutaryl-CoA lyase, cytoplasmic (370 aa).

A lipid anchor (N-myristoyl glycine) is attached at Gly2. Residues 78–345 (VKIVEVGPRD…NTGVNLYKVM (268 aa)) form the Pyruvate carboxyltransferase domain. Residue Arg86 participates in substrate binding. 3 residues coordinate a divalent metal cation: Asp87, His278, and His280. Residue Cys311 is part of the active site. A divalent metal cation is bound at residue Asn320.

Belongs to the HMG-CoA lyase family. A divalent metal cation is required as a cofactor.

It is found in the cytoplasm. The protein localises to the cytosol. Its subcellular location is the endoplasmic reticulum membrane. The enzyme catalyses (3S)-3-hydroxy-3-methylglutaryl-CoA = acetoacetate + acetyl-CoA. It functions in the pathway metabolic intermediate metabolism; (S)-3-hydroxy-3-methylglutaryl-CoA degradation; acetoacetate from (S)-3-hydroxy-3-methylglutaryl-CoA: step 1/1. Its function is as follows. Non-mitochondrial 3-hydroxy-3-methylglutaryl-CoA lyase that catalyzes a cation-dependent cleavage of (S)-3-hydroxy-3-methylglutaryl-CoA into acetyl-CoA and acetoacetate, a key step in ketogenesis, the products of which support energy production in nonhepatic animal tissues. The protein is 3-hydroxy-3-methylglutaryl-CoA lyase, cytoplasmic (HMGCLL1) of Homo sapiens (Human).